A 559-amino-acid polypeptide reads, in one-letter code: 3-phosphoinositide-dependent protein kinase 1 (559 aa).

Tyr9 bears the Phosphotyrosine; by SRC and INSR mark. Ser25 is modified (phosphoserine). The segment at 25-83 is disordered; that stretch reads SPSMVRSQTEPGSSPGIPSGVSRQGSTMDGTTAEARPSTNPLQQHPAQLPPQPRKKRPE. Residues 35-44 show a composition bias toward low complexity; the sequence is PGSSPGIPSG. Over residues 45-54 the composition is skewed to polar residues; the sequence is VSRQGSTMDG. The 261-residue stretch at 85–345 folds into the Protein kinase domain; the sequence is FKFGKILGEG…YGPLKAHPFF (261 aa). ATP-binding positions include 95 to 97 and Lys114; that span reads SFS. Residues 116-160 form a PIF-pocket region; that stretch reads LEKRHIIKENKVPYVTRERDVMSRLDHPFFVKLYFTFQDDEKLYF. ATP-binding positions include 163 to 165 and Glu169; that span reads SYA. Asp208 functions as the Proton acceptor in the catalytic mechanism. ATP-binding residues include Glu212 and Asp226. A Phosphoserine modification is found at Ser244. Lys307 carries the N6-acetyllysine modification. Residue Thr357 is modified to Phosphothreonine; by MELK. Residues Tyr376 and Tyr379 each carry the phosphotyrosine; by SRC and INSR modification. At Ser396 the chain carries Phosphoserine. At Ser397 the chain carries Phosphoserine; by MAP3K5. At Ser399 the chain carries Phosphoserine. Residue Ser401 is modified to Phosphoserine; by MAP3K5. Ser413 carries the phosphoserine modification. Residues 462–553 form the PH domain; that stretch reads KMGPVDKRKG…EVWRQQYQSN (92 aa). Ser504 is modified (phosphoserine; by PKC/PRKCQ). Residue Thr516 is modified to Phosphothreonine; by autocatalysis. The residue at position 532 (Ser532) is a Phosphoserine; by PKC/PRKCQ.

It belongs to the protein kinase superfamily. AGC Ser/Thr protein kinase family. PDPK1 subfamily. As to quaternary structure, homodimer in its autoinhibited state. Active as monomer. Interacts with NPRL2, PAK1, PTK2B, GRB14, STRAP and IKKB. The Tyr-9 phosphorylated form interacts with SRC, RASA1 and CRK (via their SH2 domains). Interacts with SGK3 in a phosphorylation-dependent manner. The tyrosine-phosphorylated form interacts with PTPN6. The Ser-244 phosphorylated form interacts with YWHAH and YWHAQ. Binds INSR in response to insulin. Interacts (via PH domain) with SMAD3, SMAD4 and SMAD7. Interacts with PKN2; the interaction stimulates PDPK1 autophosphorylation, its PI(3,4,5)P3-dependent kinase activity toward 'Ser-473' of AKT1 but also activates its kinase activity toward PRKCD and PRKCZ. Interacts with PKN1 (via C-terminus) and PPARG. Post-translationally, phosphorylation on Ser-244 in the activation loop is required for full activity. PDPK1 itself can autophosphorylate Ser-244, leading to its own activation. Autophosphorylation is inhibited by the apoptotic C-terminus cleavage product of PKN2. Tyr-9 phosphorylation is critical for stabilization of both PDPK1 and the PDPK1/SRC complex via HSP90-mediated protection of PDPK1 degradation. Angiotensin II stimulates the tyrosine phosphorylation of PDPK1 in vascular smooth muscle in a calcium- and SRC-dependent manner. Phosphorylated on Tyr-9, Tyr-376 and Tyr-379 by INSR in response to insulin. Palmitate negatively regulates autophosphorylation at Ser-244 and palmitate-induced phosphorylation at Ser-532 and Ser-504 by PKC/PRKCQ negatively regulates its ability to phosphorylate PKB/AKT1. Phosphorylation at Thr-357 by MELK partially inhibits kinase activity, the inhibition is cooperatively enhanced by phosphorylation at Ser-397 and Ser-401 by MAP3K5. Monoubiquitinated in the kinase domain, deubiquitinated by USP4. Highly expressed in heart, brain, liver and testis, also expressed in embryonic cells.

The protein localises to the cytoplasm. It is found in the nucleus. It localises to the cell membrane. The protein resides in the cell junction. Its subcellular location is the focal adhesion. It carries out the reaction L-seryl-[protein] + ATP = O-phospho-L-seryl-[protein] + ADP + H(+). The enzyme catalyses L-threonyl-[protein] + ATP = O-phospho-L-threonyl-[protein] + ADP + H(+). With respect to regulation, homodimerization regulates its activity by maintaining the kinase in an autoinhibitory conformation. NPRL2 down-regulates its activity by interfering with tyrosine phosphorylation at the Tyr-9, Tyr-376 and Tyr-379 residues. The 14-3-3 protein YWHAQ acts as a negative regulator by association with the residues surrounding the Ser-244 residue. STRAP positively regulates its activity by enhancing its autophosphorylation and by stimulating its dissociation from YWHAQ. SMAD2, SMAD3, SMAD4 and SMAD7 also positively regulate its activity by stimulating its dissociation from YWHAQ. Activated by phosphorylation on Tyr-9, Tyr-376 and Tyr-379 by INSR in response to insulin. In terms of biological role, serine/threonine kinase which acts as a master kinase, phosphorylating and activating a subgroup of the AGC family of protein kinases. Its targets include: protein kinase B (PKB/AKT1, PKB/AKT2, PKB/AKT3), p70 ribosomal protein S6 kinase (RPS6KB1), p90 ribosomal protein S6 kinase (RPS6KA1, RPS6KA2 and RPS6KA3), cyclic AMP-dependent protein kinase (PRKACA), protein kinase C (PRKCD and PRKCZ), serum and glucocorticoid-inducible kinase (SGK1, SGK2 and SGK3), p21-activated kinase-1 (PAK1), TSSK3, protein kinase PKN (PKN1 and PKN2). Plays a central role in the transduction of signals from insulin by providing the activating phosphorylation to PKB/AKT1, thus propagating the signal to downstream targets controlling cell proliferation and survival, as well as glucose and amino acid uptake and storage. Negatively regulates the TGF-beta-induced signaling by: modulating the association of SMAD3 and SMAD7 with TGF-beta receptor, phosphorylating SMAD2, SMAD3, SMAD4 and SMAD7, preventing the nuclear translocation of SMAD3 and SMAD4 and the translocation of SMAD7 from the nucleus to the cytoplasm in response to TGF-beta. Activates PPARG transcriptional activity and promotes adipocyte differentiation. Activates the NF-kappa-B pathway via phosphorylation of IKKB. The tyrosine phosphorylated form is crucial for the regulation of focal adhesions by angiotensin II. Controls proliferation, survival, and growth of developing pancreatic cells. Participates in the regulation of Ca(2+) entry and Ca(2+)-activated K(+) channels of mast cells. Essential for the motility of vascular endothelial cells (ECs) and is involved in the regulation of their chemotaxis. Plays a critical role in cardiac homeostasis by serving as a dual effector for cell survival and beta-adrenergic response. Plays an important role during thymocyte development by regulating the expression of key nutrient receptors on the surface of pre-T cells and mediating Notch-induced cell growth and proliferative responses. Provides negative feedback inhibition to toll-like receptor-mediated NF-kappa-B activation in macrophages. The chain is 3-phosphoinositide-dependent protein kinase 1 (Pdpk1) from Mus musculus (Mouse).